The following is a 145-amino-acid chain: Transcriptional regulator MraZ (145 aa).

SpoVT-AbrB domains lie at 5-50 (TFNH…ALPQ) and 81-124 (AHEV…DKAA).

Belongs to the MraZ family. As to quaternary structure, forms oligomers.

It is found in the cytoplasm. The protein resides in the nucleoid. In Anaeromyxobacter sp. (strain Fw109-5), this protein is Transcriptional regulator MraZ.